A 77-amino-acid chain; its full sequence is Acyl carrier protein (77 aa).

In terms of domain architecture, Carrier spans 2-77 (SDIADRVKKI…DAVKFISDAS (76 aa)). Ser-37 is subject to O-(pantetheine 4'-phosphoryl)serine.

Belongs to the acyl carrier protein (ACP) family. Post-translationally, 4'-phosphopantetheine is transferred from CoA to a specific serine of apo-ACP by AcpS. This modification is essential for activity because fatty acids are bound in thioester linkage to the sulfhydryl of the prosthetic group.

Its subcellular location is the cytoplasm. Its pathway is lipid metabolism; fatty acid biosynthesis. Functionally, carrier of the growing fatty acid chain in fatty acid biosynthesis. The sequence is that of Acyl carrier protein from Roseobacter denitrificans (strain ATCC 33942 / OCh 114) (Erythrobacter sp. (strain OCh 114)).